Consider the following 465-residue polypeptide: Cysteine--tRNA ligase 2 (465 aa).

Cys30 contacts Zn(2+). A 'HIGH' region motif is present at residues 32-42 (ITVYDYCHVGH). Residues Cys214, His239, and Glu243 each coordinate Zn(2+). The 'KMSKS' region motif lies at 271-275 (KMSKS). Lys274 is an ATP binding site.

The protein belongs to the class-I aminoacyl-tRNA synthetase family. Monomer. Zn(2+) serves as cofactor.

It is found in the cytoplasm. It carries out the reaction tRNA(Cys) + L-cysteine + ATP = L-cysteinyl-tRNA(Cys) + AMP + diphosphate. The protein is Cysteine--tRNA ligase 2 of Burkholderia lata (strain ATCC 17760 / DSM 23089 / LMG 22485 / NCIMB 9086 / R18194 / 383).